Here is a 337-residue protein sequence, read N- to C-terminus: UDP-glucose 4-epimerase (337 aa).

NAD(+) contacts are provided by residues 11–12, 31–36, 58–59, 80–84, N99, S124, Y149, K153, and F178; these read YI, DNLSNA, DL, and FAGLK. 2 residues coordinate substrate: S124 and Y149. Y149 functions as the Proton acceptor in the catalytic mechanism. Residues N179, 199–200, 216–218, R231, and 292–295 contribute to the substrate site; these read NL, GIF, and RDGD.

Belongs to the NAD(P)-dependent epimerase/dehydratase family. Homodimer. It depends on NAD(+) as a cofactor.

The catalysed reaction is UDP-alpha-D-glucose = UDP-alpha-D-galactose. It participates in carbohydrate metabolism; galactose metabolism. Functionally, involved in the metabolism of galactose. Catalyzes the conversion of UDP-galactose (UDP-Gal) to UDP-glucose (UDP-Glc) through a mechanism involving the transient reduction of NAD. This chain is UDP-glucose 4-epimerase (galE), found in Erwinia amylovora (Fire blight bacteria).